The primary structure comprises 491 residues: MATQWEVVIGLETHAQLSTVSKIFSGASTQFGAEPNTQACPVDLALPGVLPVLNRGAVERAIRFGLAIGSTIAPRSIFARKNYFYPDLPKGYQISQYEIPVVQGGQITIQVPANEKAGKPAYEKTVNLTRAHLEEDAGKSLHEDFAGMTGIDLNRAGTPLLEIVTEPEMRSAAEAVAYAKALHALVVWLGICDGNMQEGSFRCDANVSVRPVGQEKFGTRAEIKNLNSFRFLEEAINYEVRRQIELIEDGGEVVQETRLYDPDKRETRSMRSKEDAHDYRYFPDPDLMPLVIGRDWVERVQSGMPELPAAMQQRFVDEYGVSAYDAGVLTSSKAMAAYFESVVAKAGAANAKIVANWLMGDVSSQLNRDGIEIDAIPVSAAQLALLLQRIADGTISNKIAKEIFATIWDEKATDEGAADRIIDAKGLKQISDTGALEAIIDEVLAANAKSVEEFRAGKEKAFNALIGQAMKATKGKANPQQVNELLKKKLG.

This sequence belongs to the GatB/GatE family. GatB subfamily. As to quaternary structure, heterotrimer of A, B and C subunits.

It catalyses the reaction L-glutamyl-tRNA(Gln) + L-glutamine + ATP + H2O = L-glutaminyl-tRNA(Gln) + L-glutamate + ADP + phosphate + H(+). The catalysed reaction is L-aspartyl-tRNA(Asn) + L-glutamine + ATP + H2O = L-asparaginyl-tRNA(Asn) + L-glutamate + ADP + phosphate + 2 H(+). Its function is as follows. Allows the formation of correctly charged Asn-tRNA(Asn) or Gln-tRNA(Gln) through the transamidation of misacylated Asp-tRNA(Asn) or Glu-tRNA(Gln) in organisms which lack either or both of asparaginyl-tRNA or glutaminyl-tRNA synthetases. The reaction takes place in the presence of glutamine and ATP through an activated phospho-Asp-tRNA(Asn) or phospho-Glu-tRNA(Gln). In Burkholderia cenocepacia (strain HI2424), this protein is Aspartyl/glutamyl-tRNA(Asn/Gln) amidotransferase subunit B.